The chain runs to 343 residues: Histone H1.8 (343 aa).

A compositionally biased stretch (low complexity) spans 1–32; the sequence is MAPGSIASSDTSSSTSSSSTSSASSASAEGSS. Disordered stretches follow at residues 1 to 50 and 122 to 343; these read MAPG…VRAP and ATGS…EAEG. Residues 52–130 enclose the H15 domain; it reads RHPPVLRMVL…GATGSFKLVP (79 aa). The segment covering 132 to 142 has biased composition (basic residues); sequence DKRKIPPRKTA. Basic and acidic residues-rich tracts occupy residues 150–183, 199–219, and 235–247; these read EGKD…ERAA, QTKD…RPDK, and KVKE…ADTK. The Nuclear localization signal motif lies at 161–176; that stretch reads KKDPANTVEVKKGSRK. Residues 253-265 show a composition bias toward polar residues; sequence QPGSQSSKSTVTK.

Belongs to the histone H1/H5 family. Oocyte (at protein level).

It localises to the cytoplasm. The protein localises to the nucleus. It is found in the chromosome. Its function is as follows. May play a key role in the control of gene expression during oogenesis and early embryogenesis, presumably through the perturbation of chromatin structure. Essential for meiotic maturation of germinal vesicle-stage oocytes. The somatic type linker histone H1c is rapidly replaced by H1oo in a donor nucleus transplanted into an oocyte. The greater mobility of H1oo as compared to H1c may contribute to this rapid replacement and increased instability of the embryonic chromatin structure. The rapid replacement of H1c with H1oo may play an important role in nuclear remodeling. The chain is Histone H1.8 from Bos taurus (Bovine).